A 367-amino-acid chain; its full sequence is uncharacterized protein (367 aa).

A helical transmembrane segment spans residues Val-8–Leu-28.

The protein localises to the membrane. This is an uncharacterized protein from Bradyrhizobium diazoefficiens (strain JCM 10833 / BCRC 13528 / IAM 13628 / NBRC 14792 / USDA 110).